A 266-amino-acid polypeptide reads, in one-letter code: UPF0294 protein YafD (266 aa).

It belongs to the UPF0294 family.

The protein localises to the cytoplasm. The chain is UPF0294 protein YafD from Salmonella agona (strain SL483).